The primary structure comprises 323 residues: Serine/threonine-protein kinase-transforming protein raf (323 aa).

The region spanning 24–284 is the Protein kinase domain; the sequence is VMLSTRIGSG…PQILSSIELL (261 aa). Residues 30 to 38 and Lys50 contribute to the ATP site; that span reads IGSGSFGTV. Asp143 acts as the Proton acceptor in catalysis.

This sequence belongs to the protein kinase superfamily. TKL Ser/Thr protein kinase family. RAF subfamily.

It carries out the reaction L-seryl-[protein] + ATP = O-phospho-L-seryl-[protein] + ADP + H(+). The catalysed reaction is L-threonyl-[protein] + ATP = O-phospho-L-threonyl-[protein] + ADP + H(+). The sequence is that of Serine/threonine-protein kinase-transforming protein raf (V-RAF) from Murine sarcoma virus 3611.